The chain runs to 574 residues: Arginine--tRNA ligase (574 aa).

The 'HIGH' region motif lies at 124-134; sequence ANPNGPLHIGH.

This sequence belongs to the class-I aminoacyl-tRNA synthetase family.

Its subcellular location is the cytoplasm. It carries out the reaction tRNA(Arg) + L-arginine + ATP = L-arginyl-tRNA(Arg) + AMP + diphosphate. The protein is Arginine--tRNA ligase of Methanococcus aeolicus (strain ATCC BAA-1280 / DSM 17508 / OCM 812 / Nankai-3).